The sequence spans 121 residues: Small ribosomal subunit protein bS6 (121 aa).

The disordered stretch occupies residues Lys94–Ala121. Positions Lys104–Ser115 are enriched in basic and acidic residues.

The protein belongs to the bacterial ribosomal protein bS6 family.

Its function is as follows. Binds together with bS18 to 16S ribosomal RNA. The chain is Small ribosomal subunit protein bS6 from Leptothrix cholodnii (strain ATCC 51168 / LMG 8142 / SP-6) (Leptothrix discophora (strain SP-6)).